Here is a 224-residue protein sequence, read N- to C-terminus: 7-cyano-7-deazaguanine synthase (224 aa).

12–22 (LSGGLDSSTVT) is a binding site for ATP. Zn(2+)-binding residues include C193, C201, C204, and C207.

This sequence belongs to the QueC family. Zn(2+) is required as a cofactor.

It carries out the reaction 7-carboxy-7-deazaguanine + NH4(+) + ATP = 7-cyano-7-deazaguanine + ADP + phosphate + H2O + H(+). The protein operates within purine metabolism; 7-cyano-7-deazaguanine biosynthesis. Functionally, catalyzes the ATP-dependent conversion of 7-carboxy-7-deazaguanine (CDG) to 7-cyano-7-deazaguanine (preQ(0)). This chain is 7-cyano-7-deazaguanine synthase, found in Prochlorococcus marinus (strain MIT 9515).